Consider the following 147-residue polypeptide: Large ribosomal subunit protein uL11 (147 aa).

Belongs to the universal ribosomal protein uL11 family. As to quaternary structure, part of the ribosomal stalk of the 50S ribosomal subunit. Interacts with L10 and the large rRNA to form the base of the stalk. L10 forms an elongated spine to which L12 dimers bind in a sequential fashion forming a multimeric L10(L12)X complex. Post-translationally, one or more lysine residues are methylated.

Forms part of the ribosomal stalk which helps the ribosome interact with GTP-bound translation factors. In Phocaeicola vulgatus (strain ATCC 8482 / DSM 1447 / JCM 5826 / CCUG 4940 / NBRC 14291 / NCTC 11154) (Bacteroides vulgatus), this protein is Large ribosomal subunit protein uL11.